The primary structure comprises 346 residues: Ketol-acid reductoisomerase (NADP(+)) (346 aa).

The KARI N-terminal Rossmann domain maps to 1-189 (MQVYYDRDAD…GGGRSGIIET (189 aa)). Residues 24 to 27 (YGSQ), arginine 48, serine 51, threonine 53, and 83 to 86 (DEHQ) each bind NADP(+). Histidine 108 is a catalytic residue. Glycine 134 contributes to the NADP(+) binding site. In terms of domain architecture, KARI C-terminal knotted spans 190–335 (TFKEECETDL…EKLRAMMPWI (146 aa)). Residues aspartate 198, glutamate 202, glutamate 234, and glutamate 238 each coordinate Mg(2+). A substrate-binding site is contributed by serine 259.

Belongs to the ketol-acid reductoisomerase family. It depends on Mg(2+) as a cofactor.

The enzyme catalyses (2R)-2,3-dihydroxy-3-methylbutanoate + NADP(+) = (2S)-2-acetolactate + NADPH + H(+). The catalysed reaction is (2R,3R)-2,3-dihydroxy-3-methylpentanoate + NADP(+) = (S)-2-ethyl-2-hydroxy-3-oxobutanoate + NADPH + H(+). Its pathway is amino-acid biosynthesis; L-isoleucine biosynthesis; L-isoleucine from 2-oxobutanoate: step 2/4. It participates in amino-acid biosynthesis; L-valine biosynthesis; L-valine from pyruvate: step 2/4. In terms of biological role, involved in the biosynthesis of branched-chain amino acids (BCAA). Catalyzes an alkyl-migration followed by a ketol-acid reduction of (S)-2-acetolactate (S2AL) to yield (R)-2,3-dihydroxy-isovalerate. In the isomerase reaction, S2AL is rearranged via a Mg-dependent methyl migration to produce 3-hydroxy-3-methyl-2-ketobutyrate (HMKB). In the reductase reaction, this 2-ketoacid undergoes a metal-dependent reduction by NADPH to yield (R)-2,3-dihydroxy-isovalerate. The sequence is that of Ketol-acid reductoisomerase (NADP(+)) from Sphingopyxis alaskensis (strain DSM 13593 / LMG 18877 / RB2256) (Sphingomonas alaskensis).